A 489-amino-acid polypeptide reads, in one-letter code: ATP synthase subunit beta, chloroplastic (489 aa).

170–177 (GGAGVGKT) contacts ATP.

The protein belongs to the ATPase alpha/beta chains family. F-type ATPases have 2 components, CF(1) - the catalytic core - and CF(0) - the membrane proton channel. CF(1) has five subunits: alpha(3), beta(3), gamma(1), delta(1), epsilon(1). CF(0) has four main subunits: a(1), b(1), b'(1) and c(9-12).

It localises to the plastid. The protein localises to the chloroplast thylakoid membrane. It catalyses the reaction ATP + H2O + 4 H(+)(in) = ADP + phosphate + 5 H(+)(out). Produces ATP from ADP in the presence of a proton gradient across the membrane. The catalytic sites are hosted primarily by the beta subunits. This chain is ATP synthase subunit beta, chloroplastic, found in Zygnema circumcarinatum (Green alga).